Reading from the N-terminus, the 1338-residue chain is Fanconi anemia group I protein (1338 aa).

Lysine 525 participates in a covalent cross-link: Glycyl lysine isopeptide (Lys-Gly) (interchain with G-Cter in ubiquitin). 2 positions are modified to phosphoserine: serine 558 and serine 561. Threonine 567 is subject to Phosphothreonine.

The protein belongs to the Fanconi anemia group I protein family. As to quaternary structure, homodimer. Part of a FANCI-FANCD2 heterodimeric complex that binds and scans dsDNA for DNA damage. Interacts with FANCL. Interacts with MTMR15/FAN1. Interacts with POLN. Interacts with UBL5; the interaction promotes FANCI homodimerization. In terms of processing, monoubiquitinated by FANCL during S phase and upon genotoxic stress. Deubiquitinated by USP1 as cells enter G2/M, or once DNA repair is completed. Monoubiquitination requires the FANCA-FANCB-FANCC-FANCE-FANCF-FANCG-FANCM complex. Ubiquitination is required for binding to chromatin, DNA repair, and normal cell cycle progression. Monoubiquitination is stimulated by DNA-binding. Phosphorylated in response to DNA damage by ATM and/or ATR. Phosphorylation of FANCI promotes ubiquitination of FANCD2, which prevents DNA release from the FANCI-FANCD2 complex.

Functionally, plays an essential role in the repair of DNA double-strand breaks by homologous recombination and in the repair of interstrand DNA cross-links (ICLs) by promoting FANCD2 monoubiquitination by FANCL and participating in recruitment to DNA repair sites. The FANCI-FANCD2 complex binds and scans double-stranded DNA (dsDNA) for DNA damage; this complex stalls at DNA junctions between double-stranded DNA and single-stranded DNA. Participates in S phase and G2 phase checkpoint activation upon DNA damage. The protein is Fanconi anemia group I protein of Gallus gallus (Chicken).